Consider the following 86-residue polypeptide: Muscarinic toxin MTX6 (86 aa).

A signal peptide spans 1–21; sequence MKTLLLTLVVVTILCLDLGYT. Intrachain disulfides connect Cys24/Cys45, Cys38/Cys63, Cys67/Cys78, and Cys79/Cys84.

This sequence belongs to the three-finger toxin family. Short-chain subfamily. Aminergic toxin sub-subfamily. Monomer. As to expression, expressed by the venom gland.

It is found in the secreted. Its function is as follows. Binds to the muscarinic acetylcholine receptor (CHRM). The protein is Muscarinic toxin MTX6 of Ophiophagus hannah (King cobra).